The chain runs to 1128 residues: Adipocyte enhancer-binding protein 1 (1128 aa).

Positions 1–25 (MAAVRTASLLCGLLALLALCPEGSP) are cleaved as a signal peptide. Residues 40–368 (GFLSEFETQS…PRKGEELEEE (329 aa)) are disordered. Basic and acidic residues predominate over residues 77–109 (PRADAEAPPEKNKDKEKKGKKDKGPKAAKHLEG). Residues 113–163 (PTKKPKEKPPKATKKPKEKPPKATKKPKEKPPKATKKPKEKPPKATKRPSA) are compositionally biased toward basic residues. 2 stretches are compositionally biased toward polar residues: residues 178-187 (RSLTSPSNPG) and 198-209 (TSLNTWQGQGEE). Over residues 249 to 261 (RQKQPRPTPSRKR) the composition is skewed to basic residues. Basic and acidic residues-rich tracts occupy residues 267–282 (PEEKTQEPEERKEVDP) and 327–363 (EELKKPKKEGSSPKEDTEDKWAAEKNKDHKAGPRKGE). One can recognise an F5/8 type C domain in the interval 375-532 (IKCPPIGMES…LCMRLEVLGC (158 aa)). The interval 382–547 (MESHRIEDNQ…YSYYAQNEVV (166 aa)) is required for DNA-binding and interaction with NFKBIA. Interaction with MAPK1 and MAPK3 stretches follow at residues 413-616 (AGAN…TAGM) and 998-1128 (DPSR…FGDF). The N-linked (GlcNAc...) asparagine glycan is linked to N520. The segment at 547–977 (VTTDSLDFRH…TQCNFILARS (431 aa)) is interaction with PTEN. The region spanning 555–896 (RHHSYKDMRQ…EALLTFMEQV (342 aa)) is the Peptidase M14 domain. A required for transcriptional repression region spans residues 933-1128 (DYWRILNPGE…ETYTVNFGDF (196 aa)). The interval 1027–1056 (LRRLNSTTGPATSPTPALTLPPSPTPGSTS) is disordered. Residues 1030 to 1044 (LNSTTGPATSPTPAL) show a composition bias toward low complexity.

This sequence belongs to the peptidase M14 family. Interacts with different types of collagen, including collagens I, III, and V. Interacts with GNG5, NFKBIA, MAPK1, MAPK3 and PTEN. May interact with calmodulin. Interaction with MAPK1 may stimulate DNA-binding. Binds to DNA in vitro. In terms of processing, phosphorylated by MAPK1 in vitro. Expressed in aorta.

It localises to the secreted. In terms of biological role, as a positive regulator of collagen fibrillogenesis, it is probably involved in the organization and remodeling of the extracellular matrix. May positively regulate MAP-kinase activity in adipocytes, leading to enhanced adipocyte proliferation and reduced adipocyte differentiation. May also positively regulate NF-kappa-B activity in macrophages by promoting the phosphorylation and subsequent degradation of I-kappa-B-alpha (NFKBIA), leading to enhanced macrophage inflammatory responsiveness. Can act as a transcriptional repressor. This chain is Adipocyte enhancer-binding protein 1 (Aebp1), found in Rattus norvegicus (Rat).